Here is a 460-residue protein sequence, read N- to C-terminus: NADH-ubiquinone oxidoreductase chain 4 (460 aa).

13 helical membrane passes run 20 to 42 (AKWL…LSWL), 61 to 81 (PLST…ILAS), 94 to 113 (RAYI…AFGA), 117 to 139 (IMFY…RWGN), 148 to 168 (TYFL…LLLM), 195 to 215 (LWWA…GVHL), 225 to 245 (PIAG…YGMM), 258 to 278 (LAYP…SICL), 285 to 304 (SLIA…GILI), 308 to 330 (WGFT…LFCL), 351 to 371 (MILP…LALP), 394 to 414 (LILT…LFLM), and 436 to 456 (LLII…ELMW).

It belongs to the complex I subunit 4 family.

The protein localises to the mitochondrion membrane. It catalyses the reaction a ubiquinone + NADH + 5 H(+)(in) = a ubiquinol + NAD(+) + 4 H(+)(out). In terms of biological role, core subunit of the mitochondrial membrane respiratory chain NADH dehydrogenase (Complex I) that is believed to belong to the minimal assembly required for catalysis. Complex I functions in the transfer of electrons from NADH to the respiratory chain. The immediate electron acceptor for the enzyme is believed to be ubiquinone. This Oncorhynchus mykiss (Rainbow trout) protein is NADH-ubiquinone oxidoreductase chain 4 (MT-ND4).